The sequence spans 216 residues: Adenylate kinase (216 aa).

10-15 (GAGKGT) is a binding site for ATP. The NMP stretch occupies residues 30–59 (STGDIFRKNISENTPLGIEAKSYMDNGQLV). AMP-binding positions include Thr31, Arg36, 57-59 (QLV), 85-88 (GFPR), and Gln92. The interval 126-163 (GRRVCPSCGASYHIKFNPPTNDGKCDLCGSDVIQRKDD) is LID. Position 127 (Arg127) interacts with ATP. Cys130 and Cys133 together coordinate Zn(2+). 136-137 (SY) serves as a coordination point for ATP. Residues Cys150 and Cys153 each coordinate Zn(2+). 2 residues coordinate AMP: Arg160 and Arg171. Gln199 is an ATP binding site.

The protein belongs to the adenylate kinase family. As to quaternary structure, monomer.

It localises to the cytoplasm. The enzyme catalyses AMP + ATP = 2 ADP. It functions in the pathway purine metabolism; AMP biosynthesis via salvage pathway; AMP from ADP: step 1/1. Functionally, catalyzes the reversible transfer of the terminal phosphate group between ATP and AMP. Plays an important role in cellular energy homeostasis and in adenine nucleotide metabolism. In Clostridium perfringens (strain ATCC 13124 / DSM 756 / JCM 1290 / NCIMB 6125 / NCTC 8237 / Type A), this protein is Adenylate kinase.